Here is a 259-residue protein sequence, read N- to C-terminus: Small ribosomal subunit protein uS7m (259 aa).

A mitochondrion-targeting transit peptide spans 1-39 (MLRLIKQPLFRCASSGHLMKESLVFIHQTRTFQVGKFTS). At Thr157 the chain carries Phosphothreonine.

It belongs to the universal ribosomal protein uS7 family. In terms of assembly, component of the mitochondrial small ribosomal subunit (mt-SSU). Mature yeast 74S mitochondrial ribosomes consist of a small (37S) and a large (54S) subunit. The 37S small subunit contains a 15S ribosomal RNA (15S mt-rRNA) and at least 32 different proteins. The 54S large subunit contains a 21S rRNA (21S mt-rRNA) and at least 45 different proteins.

The protein resides in the mitochondrion. Component of the mitochondrial ribosome (mitoribosome), a dedicated translation machinery responsible for the synthesis of mitochondrial genome-encoded proteins, including at least some of the essential transmembrane subunits of the mitochondrial respiratory chain. The mitoribosomes are attached to the mitochondrial inner membrane and translation products are cotranslationally integrated into the membrane. The sequence is that of Small ribosomal subunit protein uS7m (rsm7) from Schizosaccharomyces pombe (strain 972 / ATCC 24843) (Fission yeast).